The sequence spans 249 residues: Sodium channel modifier 1 (249 aa).

The short motif at 4 to 20 (KREGDDQSQLNILKKRR) is the Bipartite nuclear localization signal element. The segment at 42–74 (YSCLVCSHRPVFDTVDMLVVHRKGKRHLEGMKW) adopts a Matrin-type zinc-finger fold. The span at 94-103 (YVKAEDDRQE) shows a compositional bias: basic and acidic residues. 3 disordered regions span residues 94–116 (YVKA…QTRK), 128–199 (YSSC…PLTE), and 228–249 (ENVE…SESS). Polar residues predominate over residues 104 to 115 (PSSSAPLLTQTR). Over residues 134 to 149 (KASERSESSSKEHRND) the composition is skewed to basic and acidic residues. The segment covering 150–170 (LANSHLSMRTESNDSRTTVHQ) has biased composition (polar residues). Positions 230 to 239 (VEFDSDEEEP) are enriched in acidic residues.

In terms of assembly, component of the minor spliceosome, which splices U12-type introns.

The protein resides in the nucleus. The protein localises to the nucleoplasm. Its subcellular location is the nucleus speckle. Functionally, as a component of the minor spliceosome, involved in the splicing of U12-type introns in pre-mRNAs. This is Sodium channel modifier 1 (scnm1) from Danio rerio (Zebrafish).